The sequence spans 293 residues: L-ornithine N(alpha)-acyltransferase (293 aa).

Belongs to the acetyltransferase family. OlsB subfamily.

The catalysed reaction is a (3R)-hydroxyacyl-[ACP] + L-ornithine = a lyso-ornithine lipid + holo-[ACP] + H(+). Its pathway is lipid metabolism. Catalyzes the first step in the biosynthesis of ornithine lipids, which are phosphorus-free membrane lipids. Catalyzes the 3-hydroxyacyl-acyl carrier protein-dependent acylation of ornithine to form lyso-ornithine lipid (LOL). This Agrobacterium fabrum (strain C58 / ATCC 33970) (Agrobacterium tumefaciens (strain C58)) protein is L-ornithine N(alpha)-acyltransferase.